Here is a 1349-residue protein sequence, read N- to C-terminus: Periaxin (1349 aa).

S7 carries the post-translational modification Phosphoserine. The PDZ domain occupies 16-99 (LVEIIVETEA…YKVSFCLKRT (84 aa)). Positions 70–84 (VFFENFKYEDALRLL) match the Nuclear export signal motif. S133 bears the Phosphoserine mark. Repeat copies occupy residues 402–406 (PPEVK), 410–414 (GPEVK), 418–422 (VPEVK), 426–430 (MPEPV), 431–435 (LPEVR), 436–440 (LPEVE), 444–448 (VSEMK), 452–456 (VPEMA), 457–461 (VPEVR), 462–466 (LPEVQ), 467–471 (LPKVP), 472–476 (EMKLP), 477–481 (EVKLP), 485–489 (EMAVP), 493–497 (LPEVQ), 501–505 (VPEMK), 506–510 (LPEVK), 514–518 (VPEMA), 519–523 (VPEVR), 524–528 (LPEVQ), 532–536 (VPEMK), 537–549 (LPKV…PEMK), 553–557 (VPEMA), 558–562 (VPEVR), 563–567 (LPEVQ), 571–575 (VPEVK), 576–580 (LPEVK), 589–593 (VPEMA), 594–598 (VPEVH), 599–603 (LPEVQ), 612–616 (VPDVK), 617–621 (LPEVK), 622–626 (LPEIK), 630–634 (VPEMV), 635–639 (VPDVH), 643–647 (VHLPK), 648–652 (VSEMR), 653–657 (LPEVQ), 661–665 (VPEVH), 669–673 (APEVK), and 674–678 (LPKAP). Residues 402-678 (PPEVKVPKGP…APEVKLPKAP (277 aa)) are 41 X 5 AA approximate tandem repeats of [LVMGIE]-[PSM]-[EDKA]-[LIVMA]-[AQKHPRT]; that may have a tripeptide spacer of [ALKD]-[IPV]-[KPH]. A phosphoserine mark is found at S794 and S974. Residues 1207–1218 (AKEGAEEGEKAK) show a composition bias toward basic and acidic residues. The segment at 1207–1349 (AKEGAEEGEK…RMEGAQAAVI (143 aa)) is disordered. Residues 1232 to 1242 (SEAVSGEGSPS) show a composition bias toward low complexity. A phosphoserine mark is found at S1236, S1240, S1242, S1289, S1295, and S1327.

It belongs to the periaxin family. As to quaternary structure, homodimer (via PDZ domain). Interacts with SCN10A. Found in a complex with SCN10A. Interacts with DRP2. Identified in a dystroglycan complex that contains at least PRX, DRP2, UTRN, DMD and DAG1. Detected in a complex composed of at least EZR, AHNAK, PPL and PRX. Identified in a complex with EZR, AHNAK, BFSP1, BFSP2, ANK2, PLEC, VIM and spectrin. Detected in eye lens (at protein level).

It localises to the nucleus. The protein resides in the cytoplasm. The protein localises to the cell membrane. Its subcellular location is the cell junction. It is found in the adherens junction. In terms of biological role, scaffolding protein that functions as part of a dystroglycan complex in Schwann cells, and as part of EZR and AHNAK-containing complexes in eye lens fiber cells. Required for the maintenance of the peripheral myelin sheath that is essential for normal transmission of nerve impulses and normal perception of sensory stimuli. Required for normal transport of MBP mRNA from the perinuclear to the paranodal regions. Required for normal remyelination after nerve injury. Required for normal elongation of Schwann cells and normal length of the internodes between the nodes of Ranvier. The demyelinated nodes of Ranvier permit saltatory transmission of nerve impulses; shorter internodes cause slower transmission of nerve impulses. Required for the formation of appositions between the abaxonal surface of the myelin sheath and the Schwann cell plasma membrane; the Schwann cell cytoplasm is restricted to regions between these appositions. Required for the formation of Cajal bands and of Schmidt-Lanterman incisures that correspond to short, cytoplasm-filled regions on myelinated nerves. Recruits DRP2 to the Schwann cell plasma membrane. Required for normal protein composition of the eye lens fiber cell plasma membrane and normal eye lens fiber cell morphology. The polypeptide is Periaxin (PRX) (Bos taurus (Bovine)).